Consider the following 474-residue polypeptide: Aspartate ammonia-lyase (474 aa).

The L-aspartate site is built by Thr105, Ser144, Thr145, Asn146, and Thr191. Positions 322–331 are SS loop; that stretch reads GSSIMPGKVN. Catalysis depends on Ser323, which acts as the Proton acceptor. Ser324 and Lys329 together coordinate L-aspartate.

This sequence belongs to the class-II fumarase/aspartase family. Aspartase subfamily. In terms of assembly, homotetramer.

It carries out the reaction L-aspartate = fumarate + NH4(+). The enzyme catalyses L-phenylalanine = (E)-cinnamate + NH4(+). Its activity is regulated as follows. Does not require any divalent metal ion for activation of catalysis, but the activity is slightly increased in the presence of Mg(2+), Mn(2+), Ca(2+) or Co(2+). In terms of biological role, catalyzes the reversible conversion of L-aspartate to fumarate and ammonia. Can also utilize L-phenylalanine to form cinnamic acid. Exhibits the highest specific activity towards L-phenylalanine, but catalytic efficiency is 3-fold higher with L-aspartate. The chain is Aspartate ammonia-lyase from Pseudomonas aeruginosa (strain ATCC 15692 / DSM 22644 / CIP 104116 / JCM 14847 / LMG 12228 / 1C / PRS 101 / PAO1).